The chain runs to 145 residues: Large ribosomal subunit protein uL24 (145 aa).

Disordered regions lie at residues 1–21 (MKFN…HFNA) and 122–145 (KAKS…KMQE). Lysine 136 is covalently cross-linked (Glycyl lysine isopeptide (Lys-Gly) (interchain with G-Cter in SUMO2)). Residue threonine 139 is modified to Phosphothreonine.

This sequence belongs to the universal ribosomal protein uL24 family. In terms of assembly, component of the large ribosomal subunit. Interacts with DHX33. In terms of processing, ufmylated by UFL1 in response to endoplasmic reticulum stress, promoting reticulophagy of endoplasmic reticulum sheets.

The protein resides in the cytoplasm. In terms of biological role, component of the large ribosomal subunit. The ribosome is a large ribonucleoprotein complex responsible for the synthesis of proteins in the cell. In Rattus norvegicus (Rat), this protein is Large ribosomal subunit protein uL24 (Rpl26).